A 432-amino-acid chain; its full sequence is MAVAVGRPSNEELRNLSLSGHVGFDSLPDQLVNKSTSQGFCFNILCVGETGIGKSTLMDTLFNTKFESDPATHNEPGVRLKARSYELQESNVRLKLTIVDTVGFGDQINKDDSYKPIVEYIDAQFEAYLQEELKIKRSLFNYHDTRIHACLYFIAPTGHSLKSLDLVTTKKLDSKVNIIPIIAKADTIAKNELHKFKSKIMSELVSNGVQIYQFPTDEETVAEINATMSVHLPFAVVGSTEEVKIGNKMAKARQYPWGVVQVENENHCDFVKLREMLIRVNMEDLREQTHTRHYELYRRCKLEEMGFKDTDPDSKPFSLQETYEAKRNEFLGELQKKEEEMRQMFVMRVKEKEAELKEAEKELHEKFDLLKRTHQEEKKKVEDKKKELEEEVNNFQKKKAAVQLLQSQAQQSGAQQTKKDKDKKNSPWLCTE.

Ala-2 is subject to N-acetylalanine. Ser-9 carries the post-translational modification Phosphoserine. A Septin-type G domain is found at 38 to 304 (QGFCFNILCV…ELYRRCKLEE (267 aa)). A G1 motif region spans residues 48 to 55 (GETGIGKS). GTP contacts are provided by residues 48-55 (GETGIGKS), Gly-103, 184-192 (KADTIAKNE), Gly-238, and Arg-253. The tract at residues 100–103 (DTVG) is G3 motif. A G4 motif region spans residues 183 to 186 (AKAD). A coiled-coil region spans residues 320 to 413 (QETYEAKRNE…LLQSQAQQSG (94 aa)). Residues 403–416 (QLLQSQAQQSGAQQ) show a composition bias toward low complexity. The tract at residues 403 to 432 (QLLQSQAQQSGAQQTKKDKDKKNSPWLCTE) is disordered.

It belongs to the TRAFAC class TrmE-Era-EngA-EngB-Septin-like GTPase superfamily. Septin GTPase family. In terms of assembly, septins polymerize into heterooligomeric protein complexes that form filaments, and can associate with cellular membranes, actin filaments and microtubules. Forms homooligomers. GTPase activity is required for filament formation. Interacts with SEPTIN7, SEPTIN9 and SEPTIN12.

It is found in the cytoplasm. The protein localises to the cytoskeleton. It localises to the synapse. Its subcellular location is the cell projection. The protein resides in the dendritic spine. It is found in the axon. Its function is as follows. Filament-forming cytoskeletal GTPase. May play a role in cytokinesis (Potential). May play a role in the cytoarchitecture of neurons, including dendritic arborization and dendritic spines, and in GABAergic synaptic connectivity. The chain is Septin-11 from Macaca fascicularis (Crab-eating macaque).